We begin with the raw amino-acid sequence, 177 residues long: ATP synthase subunit delta (177 aa).

Belongs to the ATPase delta chain family. F-type ATPases have 2 components, F(1) - the catalytic core - and F(0) - the membrane proton channel. F(1) has five subunits: alpha(3), beta(3), gamma(1), delta(1), epsilon(1). F(0) has three main subunits: a(1), b(2) and c(10-14). The alpha and beta chains form an alternating ring which encloses part of the gamma chain. F(1) is attached to F(0) by a central stalk formed by the gamma and epsilon chains, while a peripheral stalk is formed by the delta and b chains.

It localises to the cell inner membrane. Its function is as follows. F(1)F(0) ATP synthase produces ATP from ADP in the presence of a proton or sodium gradient. F-type ATPases consist of two structural domains, F(1) containing the extramembraneous catalytic core and F(0) containing the membrane proton channel, linked together by a central stalk and a peripheral stalk. During catalysis, ATP synthesis in the catalytic domain of F(1) is coupled via a rotary mechanism of the central stalk subunits to proton translocation. Functionally, this protein is part of the stalk that links CF(0) to CF(1). It either transmits conformational changes from CF(0) to CF(1) or is implicated in proton conduction. In Flavobacterium johnsoniae (strain ATCC 17061 / DSM 2064 / JCM 8514 / BCRC 14874 / CCUG 350202 / NBRC 14942 / NCIMB 11054 / UW101) (Cytophaga johnsonae), this protein is ATP synthase subunit delta.